We begin with the raw amino-acid sequence, 669 residues long: GTP-binding protein 1 (669 aa).

A disordered region spans residues 1–32 (MAAERSRSPMESPVPASMFAPEPSSPGAARAA). A phosphoserine mark is found at Ser6, Ser8, Ser12, Ser24, Ser25, Ser44, Ser47, and Ser69. Residues 158–389 (FLEVRVAVVG…LNLLSPRTSY (232 aa)) enclose the tr-type G domain. Residues 167-174 (GNVDAGKS) are G1. Residue 167-174 (GNVDAGKS) participates in GTP binding. A G2 region spans residues 206–210 (GRTSS). The segment at 252–255 (DLAG) is G3. Residues 252 to 256 (DLAGH) and 308 to 311 (TKID) contribute to the GTP site. Residues 308–311 (TKID) form a G4 region. The segment at 366 to 368 (SNV) is G5. Residues 573–595 (LLQTTNNSPMNSKPQQIKMQSTK) are compositionally biased toward polar residues. The interval 573-669 (LLQTTNNSPM…GACMTPASGC (97 aa)) is disordered. Ser580 carries the post-translational modification Phosphoserine. Over residues 633-645 (SSSLQPQPKPSSG) the composition is skewed to low complexity. Basic residues predominate over residues 646–657 (GRRRGGQRHKVK).

This sequence belongs to the TRAFAC class translation factor GTPase superfamily. Classic translation factor GTPase family. GTPBP1 subfamily. In terms of assembly, interacts with EXOSC2/RRP4, EXOSC3/RRP40, EXOSC5/RRP46, HNRNPD, HNRNPR and SYNCRIP. Identified in a complex with AANAT mRNA, but does not bind mRNA by itself.

It localises to the cytoplasm. Functionally, promotes degradation of target mRNA species. Plays a role in the regulation of circadian mRNA stability. Binds GTP and has GTPase activity. The protein is GTP-binding protein 1 (GTPBP1) of Bos taurus (Bovine).